The chain runs to 439 residues: Adenylosuccinate synthetase (439 aa).

GTP-binding positions include 25-31 (GDEGKGK), 53-55 (GHT), and lysine 62. Aspartate 26 acts as the Proton acceptor in catalysis. Aspartate 26 and glycine 53 together coordinate Mg(2+). IMP contacts are provided by residues 26-29 (DEGK) and 51-54 (NAGH). Histidine 54 functions as the Proton donor in the catalytic mechanism. The IMP site is built by threonine 141, arginine 155, asparagine 232, and threonine 247. Position 307 (threonine 307) interacts with GTP. Residue 307 to 313 (TTTNRPR) participates in substrate binding. Arginine 311 contacts IMP. GTP contacts are provided by residues arginine 313, 339–341 (KLD), and 425–427 (GVG).

This sequence belongs to the adenylosuccinate synthetase family. As to quaternary structure, homodimer. Mg(2+) serves as cofactor.

It is found in the cytoplasm. The enzyme catalyses IMP + L-aspartate + GTP = N(6)-(1,2-dicarboxyethyl)-AMP + GDP + phosphate + 2 H(+). It functions in the pathway purine metabolism; AMP biosynthesis via de novo pathway; AMP from IMP: step 1/2. Its function is as follows. Plays an important role in the salvage pathway for purine nucleotide biosynthesis. Catalyzes the first committed step in the biosynthesis of AMP from IMP. The sequence is that of Adenylosuccinate synthetase from Plasmodium yoelii yoelii.